The following is a 164-amino-acid chain: Monothiol glutaredoxin-S10 (164 aa).

The Glutaredoxin domain occupies 60–161 (EDSVKRTLAD…TMLSELDIDV (102 aa)). A [2Fe-2S] cluster-binding site is contributed by Cys-80.

This sequence belongs to the glutaredoxin family. CPYC subfamily.

It is found in the cytoplasm. May only reduce GSH-thiol disulfides, but not protein disulfides. The sequence is that of Monothiol glutaredoxin-S10 (GRXS10) from Oryza sativa subsp. japonica (Rice).